The following is a 155-amino-acid chain: UPF0178 protein ACICU_02858 (155 aa).

A disordered region spans residues 120–155 (GAGVQTGGPPPISERDKREFSSALDQTILKQKRKTA).

This sequence belongs to the UPF0178 family.

This is UPF0178 protein ACICU_02858 from Acinetobacter baumannii (strain ACICU).